Here is a 268-residue protein sequence, read N- to C-terminus: Phosphate import ATP-binding protein PstB 3 (268 aa).

The region spanning 15 to 254 (LRTENLNVYY…DATESIFNNP (240 aa)) is the ABC transporter domain. 47-54 (GPSGCGKS) provides a ligand contact to ATP.

Belongs to the ABC transporter superfamily. Phosphate importer (TC 3.A.1.7) family. In terms of assembly, the complex is composed of two ATP-binding proteins (PstB), two transmembrane proteins (PstC and PstA) and a solute-binding protein (PstS).

The protein resides in the cell inner membrane. It catalyses the reaction phosphate(out) + ATP + H2O = ADP + 2 phosphate(in) + H(+). Functionally, part of the ABC transporter complex PstSACB involved in phosphate import. Responsible for energy coupling to the transport system. This chain is Phosphate import ATP-binding protein PstB 3, found in Nostoc sp. (strain PCC 7120 / SAG 25.82 / UTEX 2576).